Reading from the N-terminus, the 547-residue chain is MAQEMRYFSTRGGKETLSFEDAVLTGLAPNGGLYIPTHIPALPKDWKTKWAGLSFPELSHEILSLFVPTSVIPSDDLQSIINTAYSSFRSPATTPIRQTGDNEYVLELWHGPTWAFKDVALQFLGELFRYFLERRNKDKTEDMEELTVVGATSGDTGSAAIYGLRSKPSITIFILYPDGRVSPIQEAQMATVPDANVYCVAVEDSDFDTCQSIVKTLFSDAQFNATHRLGAINSINWARILAQIVYYFSAYFQLPEEARKDGAKLQFVVPTGNFGDILAGWYAKKLGLPMEQLVVATNENDILERFFRTGRYEADDAVQQDQTAETAAVNGSSDGQQAVSAVKATHSPAMDILLSSNFERLLYYLALETNGTEGSDEEKRFKAQERLNDWMSTLKKDGKVDLGEDVRQAAGKDFWAERVSDGQTLEEIQKYYRREKYGPYVVDPHTAVGLTAQERSAKKASPDTTWITLSTAHPAKFSGAVELALSASEFPDFDFRRDVLPDELKKLEGLEKRVHRVKGEEGVRALIEKVKSASHEKVDAEEGRGSL.

The residue at position 117 (K117) is an N6-(pyridoxal phosphate)lysine. Pyridoxal 5'-phosphate-binding residues include G272, N273, F274, D276, and T471.

It belongs to the threonine synthase family. Pyridoxal 5'-phosphate serves as cofactor.

It carries out the reaction O-phospho-L-homoserine + H2O = L-threonine + phosphate. Its pathway is amino-acid biosynthesis; L-threonine biosynthesis; L-threonine from L-aspartate: step 5/5. Functionally, catalyzes the gamma-elimination of phosphate from L-phosphohomoserine and the beta-addition of water to produce L-threonine. The chain is Threonine synthase from Cryptococcus neoformans var. grubii serotype A (strain H99 / ATCC 208821 / CBS 10515 / FGSC 9487) (Filobasidiella neoformans var. grubii).